Here is a 141-residue protein sequence, read N- to C-terminus: uncharacterized protein (141 aa).

The next 4 membrane-spanning stretches (helical) occupy residues 7 to 27 (VAIM…AASL), 47 to 67 (SAVG…MLGV), 75 to 95 (AVLC…ILMF), and 106 to 126 (VIFV…WFVA).

It is found in the cell membrane. This is an uncharacterized protein from Bacillus subtilis (strain 168).